Reading from the N-terminus, the 264-residue chain is Thymidylate synthase (264 aa).

Arg-21 is a dUMP binding site. A (6R)-5,10-methylene-5,6,7,8-tetrahydrofolate-binding site is contributed by His-51. 126–127 (RR) is a binding site for dUMP. The active-site Nucleophile is Cys-146. DUMP contacts are provided by residues 166-169 (RSCD), Asn-177, and 207-209 (HLY). Position 169 (Asp-169) interacts with (6R)-5,10-methylene-5,6,7,8-tetrahydrofolate. Ala-263 contributes to the (6R)-5,10-methylene-5,6,7,8-tetrahydrofolate binding site.

This sequence belongs to the thymidylate synthase family. Bacterial-type ThyA subfamily. Homodimer.

Its subcellular location is the cytoplasm. It carries out the reaction dUMP + (6R)-5,10-methylene-5,6,7,8-tetrahydrofolate = 7,8-dihydrofolate + dTMP. It participates in pyrimidine metabolism; dTTP biosynthesis. Catalyzes the reductive methylation of 2'-deoxyuridine-5'-monophosphate (dUMP) to 2'-deoxythymidine-5'-monophosphate (dTMP) while utilizing 5,10-methylenetetrahydrofolate (mTHF) as the methyl donor and reductant in the reaction, yielding dihydrofolate (DHF) as a by-product. This enzymatic reaction provides an intracellular de novo source of dTMP, an essential precursor for DNA biosynthesis. The protein is Thymidylate synthase of Shewanella sp. (strain ANA-3).